Consider the following 127-residue polypeptide: Phosphoribosyl-AMP cyclohydrolase (127 aa).

D75 is a Mg(2+) binding site. C76 contributes to the Zn(2+) binding site. 2 residues coordinate Mg(2+): D77 and D79. Positions 93 and 100 each coordinate Zn(2+).

This sequence belongs to the PRA-CH family. As to quaternary structure, homodimer. Requires Mg(2+) as cofactor. The cofactor is Zn(2+).

The protein resides in the cytoplasm. The enzyme catalyses 1-(5-phospho-beta-D-ribosyl)-5'-AMP + H2O = 1-(5-phospho-beta-D-ribosyl)-5-[(5-phospho-beta-D-ribosylamino)methylideneamino]imidazole-4-carboxamide. The protein operates within amino-acid biosynthesis; L-histidine biosynthesis; L-histidine from 5-phospho-alpha-D-ribose 1-diphosphate: step 3/9. Catalyzes the hydrolysis of the adenine ring of phosphoribosyl-AMP. This Desulfotalea psychrophila (strain LSv54 / DSM 12343) protein is Phosphoribosyl-AMP cyclohydrolase.